A 358-amino-acid chain; its full sequence is tRNA-specific 2-thiouridylase MnmA (358 aa).

Residues 6–13 (ALSGGVDS) and M32 contribute to the ATP site. C103 functions as the Nucleophile in the catalytic mechanism. A disulfide bridge links C103 with C201. ATP is bound at residue G127. An interaction with tRNA region spans residues 151-153 (KDQ). The active-site Cysteine persulfide intermediate is C201.

It belongs to the MnmA/TRMU family.

Its subcellular location is the cytoplasm. The catalysed reaction is S-sulfanyl-L-cysteinyl-[protein] + uridine(34) in tRNA + AH2 + ATP = 2-thiouridine(34) in tRNA + L-cysteinyl-[protein] + A + AMP + diphosphate + H(+). Its function is as follows. Catalyzes the 2-thiolation of uridine at the wobble position (U34) of tRNA, leading to the formation of s(2)U34. This Thermotoga maritima (strain ATCC 43589 / DSM 3109 / JCM 10099 / NBRC 100826 / MSB8) protein is tRNA-specific 2-thiouridylase MnmA.